A 162-amino-acid chain; its full sequence is Protein FAM167B (162 aa).

The protein belongs to the FAM167 (SEC) family.

The polypeptide is Protein FAM167B (Fam167b) (Mus musculus (Mouse)).